Reading from the N-terminus, the 619-residue chain is Chaperone protein HscA homolog (619 aa).

This sequence belongs to the heat shock protein 70 family.

Its function is as follows. Chaperone involved in the maturation of iron-sulfur cluster-containing proteins. Has a low intrinsic ATPase activity which is markedly stimulated by HscB. The polypeptide is Chaperone protein HscA homolog (Shewanella frigidimarina (strain NCIMB 400)).